The chain runs to 214 residues: Adenylate kinase (214 aa).

10-15 (GAGKGT) lines the ATP pocket. Residues 30 to 59 (STGDIFRANIKNGTELGKKAKTYMDQGALV) are NMP. AMP-binding positions include Thr31, Arg36, 57-59 (ALV), 85-88 (GFPR), and Gln92. The tract at residues 126 to 163 (GRRACLNCGATYHIVFNPTKVEGKCDACGADTVLRDDD) is LID. Arg127 contacts ATP. Zn(2+) contacts are provided by Cys130 and Cys133. 136–137 (TY) is a binding site for ATP. Positions 150 and 153 each coordinate Zn(2+). Residues Arg160 and Arg171 each contribute to the AMP site. Lys199 contacts ATP.

Belongs to the adenylate kinase family. In terms of assembly, monomer.

Its subcellular location is the cytoplasm. It carries out the reaction AMP + ATP = 2 ADP. Its pathway is purine metabolism; AMP biosynthesis via salvage pathway; AMP from ADP: step 1/1. Functionally, catalyzes the reversible transfer of the terminal phosphate group between ATP and AMP. Plays an important role in cellular energy homeostasis and in adenine nucleotide metabolism. The sequence is that of Adenylate kinase from Agathobacter rectalis (strain ATCC 33656 / DSM 3377 / JCM 17463 / KCTC 5835 / VPI 0990) (Eubacterium rectale).